We begin with the raw amino-acid sequence, 2485 residues long: Tyrosine-protein phosphatase non-receptor type 13 (2485 aa).

The KIND domain maps to 3-190; sequence VSLAEALEVR…SGTDQLSCNS (188 aa). The disordered stretch occupies residues 186-220; sequence LSCNSEQKPDRSQAIRDRLRGKGLPTGRSSTSDVL. Positions 192–205 are enriched in basic and acidic residues; that stretch reads QKPDRSQAIRDRLR. Residue Ser240 is modified to Phosphoserine. Positions 260–283 are disordered; it reads SDNSGREDSENTFSPYQFKTSGPE. Residues 270–279 are compositionally biased toward polar residues; it reads NTFSPYQFKT. Phosphoserine occurs at positions 301 and 302. Residues 433–467 form a disordered region; the sequence is RSEASKRFESSSGLPGVDETLSQGQSQRPSRQYET. Polar residues predominate over residues 452–465; it reads TLSQGQSQRPSRQY. The stretch at 469–504 forms a coiled coil; sequence FEGNLINQEIMLKRQEEELMQLQAKMALRQSRLSLY. The region spanning 572-872 is the FERM domain; sequence RKVNIMLLNG…YQHKFQLQMR (301 aa). Ser890, Ser897, Ser908, Ser911, and Ser914 each carry phosphoserine. Disordered regions lie at residues 947–975 and 995–1049; these read QNSS…DLSQ and TVAE…IEDP. A compositionally biased stretch (basic and acidic residues) spans 950–971; sequence SKEKNDKASWEEKPREMSKSYH. A compositionally biased stretch (polar residues) spans 1020–1032; the sequence is KLNNSKSVASLNR. A phosphoserine mark is found at Ser1029, Ser1033, and Ser1085. Over residues 1033-1042 the composition is skewed to basic and acidic residues; sequence SPERRKHESD. The PDZ 1 domain occupies 1093–1178; sequence LVNLKKDAKY…EDVTLVISQP (86 aa). 2 disordered regions span residues 1227–1258 and 1273–1362; these read HISE…SLSQ and TWQE…SPPK. Composition is skewed to polar residues over residues 1243–1258, 1273–1288, and 1327–1359; these read SLSS…SLSQ, TWQE…SVIS, and TYSS…FSSS. PDZ domains lie at 1368-1452 and 1501-1588; these read EVEL…LEKG and EVKL…LCRP. A compositionally biased stretch (polar residues) spans 1608-1630; that stretch reads AQVLPNSSKDSSQPSCVEQSTSS. Disordered stretches follow at residues 1608–1665 and 1715–1751; these read AQVL…DLVT and PNKP…SSMD. Residues 1736–1749 are compositionally biased toward low complexity; that stretch reads QSYQPQSESASSSS. 2 PDZ domains span residues 1788–1868 and 1882–1965; these read LITL…IGRV and PDIT…ATRN. The disordered stretch occupies residues 1971–1996; sequence PSSKRSAVSAPKSTKGNGSYSVGSCS. Positions 1973–1996 are enriched in polar residues; it reads SKRSAVSAPKSTKGNGSYSVGSCS. In terms of domain architecture, Tyrosine-protein phosphatase spans 2213–2467; that stretch reads PSKELENLQE…IFCYQVILYV (255 aa). Residues Asp2378, 2408–2414, and Gln2452 contribute to the substrate site; that span reads CSAGIGR. The active-site Phosphocysteine intermediate is Cys2408. Residues 2408-2414 form a substrate region; sequence CSAGIGR.

Belongs to the protein-tyrosine phosphatase family. Non-receptor class subfamily. In terms of assembly, interacts (via the first PDZ domain) with PLEKHA1 and PLEKHA2. Interacts (via the second PDZ domain) with TNFRSF6 (Fas receptor) (via C-terminus). Interacts (via the second PDZ domain) with TRIP6 (via the third LIM domain and C-terminus). Interacts (via the third PDZ domain) with NGFR (via C-terminal SVP motif) and PKN2 (via C-terminus). Interacts (via the second or fourth PDZ domains) with PDLIM4 (via C-terminus only or via combined C-terminus and LIM domain, but not LIM domain only). Found in a complex with PDLIM4 and TRIP6. Interacts with PDLIM4; this interaction results in dephosphorylation of SRC 'Tyr-419' by this protein leading to its inactivation. Interacts with BRD7. Interacts with RAPGEF6. Interacts with ARHGAP29. Interacts with PIK3R2; dephosphorylates PIK3R2. Interacts with FBXL2. Interacts (via the FERM domain) with ENTR1. Found in a complex with ENTR1, PTPN13 and GIT1. In terms of tissue distribution, expressed in keratinocytes (at protein level). Present in most tissues with the exception of the liver and skeletal muscle. Most abundant in lung, kidney and fetal brain.

Its subcellular location is the cytoplasm. It localises to the cytoskeleton. It is found in the nucleus. The protein localises to the cell projection. The protein resides in the lamellipodium. The catalysed reaction is O-phospho-L-tyrosyl-[protein] + H2O = L-tyrosyl-[protein] + phosphate. Its function is as follows. Tyrosine phosphatase which negatively regulates FAS-induced apoptosis and NGFR-mediated pro-apoptotic signaling. May regulate phosphoinositide 3-kinase (PI3K) signaling through dephosphorylation of PIK3R2. This chain is Tyrosine-protein phosphatase non-receptor type 13 (PTPN13), found in Homo sapiens (Human).